Here is a 304-residue protein sequence, read N- to C-terminus: Quinolinate synthase (304 aa).

Iminosuccinate is bound by residues H24 and S41. C86 contacts [4Fe-4S] cluster. Residues 112–114 and S129 each bind iminosuccinate; that span reads YVN. C171 is a [4Fe-4S] cluster binding site. Iminosuccinate is bound by residues 197 to 199 and T214; that span reads HPE. C259 is a [4Fe-4S] cluster binding site.

Belongs to the quinolinate synthase family. Type 2 subfamily. Requires [4Fe-4S] cluster as cofactor.

The protein resides in the cytoplasm. It catalyses the reaction iminosuccinate + dihydroxyacetone phosphate = quinolinate + phosphate + 2 H2O + H(+). The protein operates within cofactor biosynthesis; NAD(+) biosynthesis; quinolinate from iminoaspartate: step 1/1. Functionally, catalyzes the condensation of iminoaspartate with dihydroxyacetone phosphate to form quinolinate. In Methanosarcina barkeri (strain Fusaro / DSM 804), this protein is Quinolinate synthase.